The following is a 40-amino-acid chain: Esterase-4 (40 aa).

Belongs to the type-B carboxylesterase/lipase family.

It catalyses the reaction a carboxylic ester + H2O = an alcohol + a carboxylate + H(+). This chain is Esterase-4 (Est-4), found in Drosophila mojavensis (Fruit fly).